The sequence spans 49 residues: MVEAVYRCFKCGREVKLDLSITRDLRCPYCGSKILYKPRPKVPRRVKAI.

Zn(2+)-binding residues include Cys11, Cys27, and Cys30.

This sequence belongs to the archaeal Rpo12/eukaryotic RPC10 RNA polymerase subunit family. Part of the RNA polymerase complex. The cofactor is Zn(2+).

The protein resides in the cytoplasm. It carries out the reaction RNA(n) + a ribonucleoside 5'-triphosphate = RNA(n+1) + diphosphate. Functionally, DNA-dependent RNA polymerase (RNAP) catalyzes the transcription of DNA into RNA using the four ribonucleoside triphosphates as substrates. The sequence is that of DNA-directed RNA polymerase subunit Rpo12 from Pyrococcus furiosus (strain ATCC 43587 / DSM 3638 / JCM 8422 / Vc1).